The chain runs to 459 residues: Exodeoxyribonuclease 7 large subunit (459 aa).

Belongs to the XseA family. As to quaternary structure, heterooligomer composed of large and small subunits.

Its subcellular location is the cytoplasm. It catalyses the reaction Exonucleolytic cleavage in either 5'- to 3'- or 3'- to 5'-direction to yield nucleoside 5'-phosphates.. In terms of biological role, bidirectionally degrades single-stranded DNA into large acid-insoluble oligonucleotides, which are then degraded further into small acid-soluble oligonucleotides. In Pseudomonas fluorescens (strain ATCC BAA-477 / NRRL B-23932 / Pf-5), this protein is Exodeoxyribonuclease 7 large subunit.